A 92-amino-acid chain; its full sequence is Progonadoliberin-1 (92 aa).

A signal peptide spans 1–23 (MELVPKFLAGLILLTLCVGGCYA). At Q24 the chain carries Pyrrolidone carboxylic acid. G33 carries the glycine amide modification.

It belongs to the GnRH family.

It is found in the secreted. Stimulates the secretion of gonadotropins; it stimulates the secretion of both luteinizing and follicle-stimulating hormones. This Tupaia belangeri (Common tree shrew) protein is Progonadoliberin-1 (GNRH1).